A 609-amino-acid polypeptide reads, in one-letter code: Proline--tRNA ligase (609 aa).

The protein belongs to the class-II aminoacyl-tRNA synthetase family. ProS type 1 subfamily. As to quaternary structure, homodimer.

It is found in the cytoplasm. The catalysed reaction is tRNA(Pro) + L-proline + ATP = L-prolyl-tRNA(Pro) + AMP + diphosphate. Catalyzes the attachment of proline to tRNA(Pro) in a two-step reaction: proline is first activated by ATP to form Pro-AMP and then transferred to the acceptor end of tRNA(Pro). As ProRS can inadvertently accommodate and process non-cognate amino acids such as alanine and cysteine, to avoid such errors it has two additional distinct editing activities against alanine. One activity is designated as 'pretransfer' editing and involves the tRNA(Pro)-independent hydrolysis of activated Ala-AMP. The other activity is designated 'posttransfer' editing and involves deacylation of mischarged Ala-tRNA(Pro). The misacylated Cys-tRNA(Pro) is not edited by ProRS. In Synechococcus sp. (strain JA-3-3Ab) (Cyanobacteria bacterium Yellowstone A-Prime), this protein is Proline--tRNA ligase.